The primary structure comprises 475 residues: GlcNAc-binding protein A (475 aa).

Residues 1–27 form the signal peptide; the sequence is MPKLTQLSLVTLALTAGSTLVSQTASA. The region spanning 28-195 is the Chitin-binding type-4 domain; it reads HGYVVSPESR…SFYNAIDVNF (168 aa). Residues 426–468 form the Chitin-binding type-3 domain; it reads AGTKVLQPKTGKVYQCKPWPYNGYCVQWSPTATGFEPGIGNSW.

The protein belongs to the GbpA family.

It is found in the secreted. Functionally, probably interacts with GlcNAc residues. May promote attachment to both epithelial cell surfaces and chitin. The protein is GlcNAc-binding protein A of Shewanella oneidensis (strain ATCC 700550 / JCM 31522 / CIP 106686 / LMG 19005 / NCIMB 14063 / MR-1).